Consider the following 321-residue polypeptide: L-carnitine dehydrogenase (321 aa).

Position 7–12 (7–12) interacts with NAD(+); that stretch reads GTGVIG.

Belongs to the 3-hydroxyacyl-CoA dehydrogenase family. L-carnitine dehydrogenase subfamily. As to quaternary structure, homodimer.

It localises to the cytoplasm. It catalyses the reaction carnitine + NAD(+) = 3-dehydrocarnitine + NADH + H(+). The protein operates within amine and polyamine metabolism; carnitine metabolism. In terms of biological role, catalyzes the NAD(+)-dependent oxidation of L-carnitine to 3-dehydrocarnitine. The sequence is that of L-carnitine dehydrogenase from Staphylococcus epidermidis (strain ATCC 12228 / FDA PCI 1200).